We begin with the raw amino-acid sequence, 217 residues long: 2-C-methyl-D-erythritol 4-phosphate cytidylyltransferase (217 aa).

The protein belongs to the IspD/TarI cytidylyltransferase family. IspD subfamily.

The catalysed reaction is 2-C-methyl-D-erythritol 4-phosphate + CTP + H(+) = 4-CDP-2-C-methyl-D-erythritol + diphosphate. Its pathway is isoprenoid biosynthesis; isopentenyl diphosphate biosynthesis via DXP pathway; isopentenyl diphosphate from 1-deoxy-D-xylulose 5-phosphate: step 2/6. Functionally, catalyzes the formation of 4-diphosphocytidyl-2-C-methyl-D-erythritol from CTP and 2-C-methyl-D-erythritol 4-phosphate (MEP). This Chlamydia abortus (strain DSM 27085 / S26/3) (Chlamydophila abortus) protein is 2-C-methyl-D-erythritol 4-phosphate cytidylyltransferase.